We begin with the raw amino-acid sequence, 491 residues long: MNANELTIAEARDALAKGELSAVDLTMACLTAIDAGTPLNAFVHLTPEIALDQARASDARRGEGAGALNGIPLGIKDLFCTRGVASQAASNILKGFKPEYESTVTSKLFAAGAVMLGKLNMDEFAMGSSNETSCYGDAVNPWKVDDRKLTPGGSSGGSAAAVAADLCLGATGTDTGGSIRQPAAFTGIVGIKPTYGRVSRWGIVAFASSLDQAGPMTKTVRDAAILLGAMAGHDPKDSTSADIPVPDFEAALTGDIRGKKIGIPREYRMEGMPAEIEALWAKGREMLADAGAEIVDISLPHTKYALPAYYVIAPAEASSNLARYDGVRYGHRAKLGQGDGIVDMYEKTRAEGFGKEVQRRVMIGTYVLSAGFYDAYYNRARKVRALIKRDFDQVFAEGIDAILTPATPSSAFGLGEMAHADPVEMYLNDVFTVTVNLAGLPGISVPVGLDAKGLPLGLQLIGRPWDEAGLLNHAHVLEQAAGFVEKPRKWW.

Residues K76 and S154 each act as charge relay system in the active site. The Acyl-ester intermediate role is filled by S178.

Belongs to the amidase family. GatA subfamily. Heterotrimer of A, B and C subunits.

The enzyme catalyses L-glutamyl-tRNA(Gln) + L-glutamine + ATP + H2O = L-glutaminyl-tRNA(Gln) + L-glutamate + ADP + phosphate + H(+). Functionally, allows the formation of correctly charged Gln-tRNA(Gln) through the transamidation of misacylated Glu-tRNA(Gln) in organisms which lack glutaminyl-tRNA synthetase. The reaction takes place in the presence of glutamine and ATP through an activated gamma-phospho-Glu-tRNA(Gln). In Cereibacter sphaeroides (strain ATCC 17025 / ATH 2.4.3) (Rhodobacter sphaeroides), this protein is Glutamyl-tRNA(Gln) amidotransferase subunit A.